The chain runs to 325 residues: Tagatose 1,6-diphosphate aldolase (325 aa).

It belongs to the aldolase LacD family.

It carries out the reaction D-tagatofuranose 1,6-bisphosphate = D-glyceraldehyde 3-phosphate + dihydroxyacetone phosphate. It functions in the pathway carbohydrate metabolism; D-tagatose 6-phosphate degradation; D-glyceraldehyde 3-phosphate and glycerone phosphate from D-tagatose 6-phosphate: step 2/2. The protein is Tagatose 1,6-diphosphate aldolase of Staphylococcus haemolyticus (strain JCSC1435).